We begin with the raw amino-acid sequence, 122 residues long: Small ribosomal subunit protein uS13 (122 aa).

The disordered stretch occupies residues 94–122 (RGLPVRGQKTKTNARTRKGPRKTVAGKRK).

It belongs to the universal ribosomal protein uS13 family. As to quaternary structure, part of the 30S ribosomal subunit. Forms a loose heterodimer with protein S19. Forms two bridges to the 50S subunit in the 70S ribosome.

Its function is as follows. Located at the top of the head of the 30S subunit, it contacts several helices of the 16S rRNA. In the 70S ribosome it contacts the 23S rRNA (bridge B1a) and protein L5 of the 50S subunit (bridge B1b), connecting the 2 subunits; these bridges are implicated in subunit movement. Contacts the tRNAs in the A and P-sites. This chain is Small ribosomal subunit protein uS13, found in Syntrophotalea carbinolica (strain DSM 2380 / NBRC 103641 / GraBd1) (Pelobacter carbinolicus).